The sequence spans 300 residues: MIKTIQKELEGLDIRFDEPLKKYTYTKVGGPADYLAFPRNRLELSRIVKFANSQNIPWMVLGNASNIIVRDGGIRGFVIMFDKLSTVTVNGYVIEAEAGANLIETTRIARYHSLTGFEFACGIPGSVGGAVFMNAGAYGGEIAHILLSAQVLTPQGELKTIEARNMQFGYRHSVIQESGDIVISAKFALKPGDHLMITQEMDRLTYLRELKQPLEYPSCGSVFKRPPGHFAGQLISEAHLKGQRIGGVEVSQKHAGFMVNIAEGSAQDYENLIEHVINTVESTSGVHLEPEVRIIGESLL.

Positions 27-192 (KVGGPADYLA…ISAKFALKPG (166 aa)) constitute an FAD-binding PCMH-type domain. Arginine 171 is an active-site residue. The active-site Proton donor is the serine 221. Residue glutamate 291 is part of the active site.

Belongs to the MurB family. FAD is required as a cofactor.

The protein localises to the cytoplasm. The catalysed reaction is UDP-N-acetyl-alpha-D-muramate + NADP(+) = UDP-N-acetyl-3-O-(1-carboxyvinyl)-alpha-D-glucosamine + NADPH + H(+). The protein operates within cell wall biogenesis; peptidoglycan biosynthesis. Cell wall formation. The sequence is that of UDP-N-acetylenolpyruvoylglucosamine reductase from Streptococcus agalactiae serotype Ia (strain ATCC 27591 / A909 / CDC SS700).